The primary structure comprises 64 residues: Epidermal growth factor (64 aa).

A signal peptide spans 1-21 (MMRHLLLVGAAILIFVSDAQA). Residue Gln22 is modified to Pyrrolidone carboxylic acid. An EGF-like domain is found at 25 to 61 (GEDPCQIVRCSYGANCIAYGDTAICECPFGYSGIRCQ). Intrachain disulfides connect Cys29-Cys40, Cys34-Cys49, and Cys51-Cys60.

In terms of tissue distribution, albumen gland. Up-regulated in adult CNS after axotomy.

It is found in the secreted. Its function is as follows. Induces neurite outgrowth in specific adult neurons in vitro. In Lymnaea stagnalis (Great pond snail), this protein is Epidermal growth factor.